The chain runs to 355 residues: Probable L-aspartate decarboxylase (355 aa).

An N6-(pyridoxal phosphate)lysine modification is found at Lys210.

This sequence belongs to the group II decarboxylase family. MfnA subfamily. The cofactor is pyridoxal 5'-phosphate.

It catalyses the reaction L-aspartate + H(+) = beta-alanine + CO2. It participates in cofactor biosynthesis; coenzyme A biosynthesis. Its function is as follows. Catalyzes the decarboxylation of L-aspartate to produce beta-alanine. The chain is Probable L-aspartate decarboxylase from Halobacterium salinarum (strain ATCC 29341 / DSM 671 / R1).